The sequence spans 489 residues: Argininosuccinate lyase (489 aa).

The segment at glutamine 462–serine 489 is disordered.

This sequence belongs to the lyase 1 family. Argininosuccinate lyase subfamily.

Its subcellular location is the cytoplasm. It carries out the reaction 2-(N(omega)-L-arginino)succinate = fumarate + L-arginine. The protein operates within amino-acid biosynthesis; L-arginine biosynthesis; L-arginine from L-ornithine and carbamoyl phosphate: step 3/3. This is Argininosuccinate lyase from Synechococcus sp. (strain JA-3-3Ab) (Cyanobacteria bacterium Yellowstone A-Prime).